A 119-amino-acid chain; its full sequence is Basic phospholipase A2 notechis II-5 (119 aa).

Cystine bridges form between Cys-11-Cys-71, Cys-27-Cys-118, Cys-29-Cys-45, Cys-44-Cys-99, Cys-51-Cys-92, Cys-60-Cys-85, and Cys-78-Cys-90. Ca(2+) contacts are provided by Tyr-28, Gly-30, and Gly-32. His-48 is a catalytic residue. Residue Asp-49 coordinates Ca(2+). The active site involves Asp-93.

The protein belongs to the phospholipase A2 family. Group I subfamily. D49 sub-subfamily. It depends on Ca(2+) as a cofactor. Expressed by the venom gland.

It localises to the secreted. The catalysed reaction is a 1,2-diacyl-sn-glycero-3-phosphocholine + H2O = a 1-acyl-sn-glycero-3-phosphocholine + a fatty acid + H(+). Functionally, snake venom phospholipase A2 (PLA2) that inhibits neuromuscular transmission by blocking acetylcholine release from the nerve termini. Notechis II-5 is less toxic than notexin but has a higher specific phospholipase activity. PLA2 catalyzes the calcium-dependent hydrolysis of the 2-acyl groups in 3-sn-phosphoglycerides. The protein is Basic phospholipase A2 notechis II-5 of Notechis scutatus scutatus (Mainland tiger snake).